The following is a 239-amino-acid chain: Cysteine-rich venom protein ENH1 (239 aa).

The N-terminal stretch at 1–18 (MIVFILLSLAAVLQQFVA) is a signal peptide. The region spanning 37 to 165 (VDMHNSFRRS…PYNYFYVCQY (129 aa)) is the SCP domain. Disulfide bonds link cysteine 74–cysteine 152, cysteine 91–cysteine 166, cysteine 147–cysteine 163, cysteine 185–cysteine 192, cysteine 188–cysteine 197, cysteine 210–cysteine 228, and cysteine 219–cysteine 232. The ShKT domain maps to 201 to 234 (CPITNTFTNCDSLLQQNSCEDSYIKTNCGASCFC).

It belongs to the CRISP family. As to expression, expressed by the venom gland.

It localises to the secreted. In terms of biological role, blocks contraction of smooth muscle elicited by high potassium-induced depolarization, but does not block caffeine-stimulated contraction. May target voltage-gated calcium channels on smooth muscle. The polypeptide is Cysteine-rich venom protein ENH1 (Pseudoferania polylepis (Macleay's water snake)).